A 607-amino-acid chain; its full sequence is T-box transcription factor TBX18 (607 aa).

The Engrailed homology 1 repressor signature appears at 18–28 (HAFSVEALIGA). Positions 30–141 (KQQQLQKKRR…PLPSPQAPRV (112 aa)) are disordered. The Nuclear localization signal signature appears at 36–40 (KKRRK). Residues 44-53 (EEAAGAVDDG) show a composition bias toward low complexity. A DNA-binding region (T-box) is located at residues 143-330 (LQGAELWKRF…RNPFAKGFRD (188 aa)).

In terms of assembly, homodimer. Can form a heterodimer with TBX15. Interacts with GATA4 and NKX2-5. Interacts with PAX3. Interacts (via engrailed homology 1 repressor motif) with TLE3; this interaction represses TBX18 transcriptional activity. Interacts with SIX1.

The protein resides in the nucleus. Acts as a transcriptional repressor involved in developmental processes of a variety of tissues and organs, including the heart and coronary vessels, the ureter and the vertebral column. Required for embryonic development of the sino atrial node (SAN) head area. This chain is T-box transcription factor TBX18 (TBX18), found in Homo sapiens (Human).